The primary structure comprises 207 residues: Uracil phosphoribosyltransferase (207 aa).

5-phospho-alpha-D-ribose 1-diphosphate contacts are provided by residues Arg-77, Arg-102, and 129-137 (DPMLATGGS). Uracil is bound by residues Ile-192 and 197–199 (GDA). Position 198 (Asp-198) interacts with 5-phospho-alpha-D-ribose 1-diphosphate.

Belongs to the UPRTase family. The cofactor is Mg(2+).

The enzyme catalyses UMP + diphosphate = 5-phospho-alpha-D-ribose 1-diphosphate + uracil. It functions in the pathway pyrimidine metabolism; UMP biosynthesis via salvage pathway; UMP from uracil: step 1/1. Allosterically activated by GTP. Catalyzes the conversion of uracil and 5-phospho-alpha-D-ribose 1-diphosphate (PRPP) to UMP and diphosphate. This chain is Uracil phosphoribosyltransferase, found in Nocardia farcinica (strain IFM 10152).